Reading from the N-terminus, the 234-residue chain is Sugar fermentation stimulation protein homolog (234 aa).

It belongs to the SfsA family.

In Shewanella sp. (strain ANA-3), this protein is Sugar fermentation stimulation protein homolog.